The following is a 375-amino-acid chain: Probable pectin lyase C (375 aa).

A signal peptide spans 1–20 (MKITSTIPAVLLGLAPLSAA). 2 disulfides stabilise this stretch: cysteine 83-cysteine 100 and cysteine 92-cysteine 220. Arginine 250 is a catalytic residue. A disulfide bond links cysteine 317 and cysteine 325.

The protein belongs to the polysaccharide lyase 1 family.

It is found in the secreted. The enzyme catalyses Eliminative cleavage of (1-&gt;4)-alpha-D-galacturonan methyl ester to give oligosaccharides with 4-deoxy-6-O-methyl-alpha-D-galact-4-enuronosyl groups at their non-reducing ends.. In terms of biological role, pectinolytic enzymes consist of four classes of enzymes: pectin lyase, polygalacturonase, pectin methylesterase and rhamnogalacturonase. Among pectinolytic enzymes, pectin lyase is the most important in depolymerization of pectin, since it cleaves internal glycosidic bonds of highly methylated pectins. This chain is Probable pectin lyase C (pelC), found in Aspergillus oryzae (strain ATCC 42149 / RIB 40) (Yellow koji mold).